Reading from the N-terminus, the 347-residue chain is Nod factor export ATP-binding protein I (347 aa).

Over residues 1–11 (MGENMEREMLR) the composition is skewed to basic and acidic residues. The disordered stretch occupies residues 1–32 (MGENMEREMLRPKTIAMDQNSASARSNPEREI). Residues 17 to 26 (MDQNSASARS) show a composition bias toward polar residues. Positions 49–279 (IDLQAVTMIY…IIGCPVIEVY (231 aa)) constitute an ABC transporter domain. Residue 81-88 (GPNGAGKS) coordinates ATP.

Belongs to the ABC transporter superfamily. Lipooligosaccharide exporter (TC 3.A.1.102) family. As to quaternary structure, the complex is composed of two ATP-binding proteins (NodI) and two transmembrane proteins (NodJ).

The protein resides in the cell inner membrane. Its function is as follows. Part of the ABC transporter complex NodIJ involved in the export of the nodulation factors (Nod factors), the bacterial signal molecules that induce symbiosis and subsequent nodulation induction. Nod factors are LCO (lipo-chitin oligosaccharide), a modified beta-1,4-linked N-acetylglucosamine oligosaccharide. This subunit is responsible for energy coupling to the transport system. The chain is Nod factor export ATP-binding protein I from Neorhizobium galegae (Rhizobium galegae).